A 267-amino-acid chain; its full sequence is MARNAEKAMTALARWRRMKEEEERGPIARRPHDVKDCRNLSDAERFRREIVRDASKKITAIQNPGLGEFKLRDLNDEVNRLIKLKHAWEQRIRELGGTDYRKYAQKELDAIGRETGNSRGYKYFGAAKDLPGVRELFEKSTEGEEQRRHRADLLRNIDAHYFGYLDDEDGRLIPLEKLIEEKNIERINKEFAEKQAQKQQTASDAAPENIYKVEEDDDDDLETQESTVIGEDGRPMTIRHVLLPTQQDIEEMLLEQKKQELMAKYLD.

Residues 175-204 adopt a coiled-coil conformation; the sequence is LEKLIEEKNIERINKEFAEKQAQKQQTASD. The disordered stretch occupies residues 195 to 221; that stretch reads QAQKQQTASDAAPENIYKVEEDDDDDL.

The protein belongs to the ISY1 family. In terms of tissue distribution, ubiquitously expressed.

Its subcellular location is the nucleus. Its function is as follows. Regulates the processing of the mir-60 microRNA (miRNA), which in turn negatively regulates the expression of the transcription factor zip-10. Does not affect the splicing of zip-10. The polypeptide is Protein isy-1 (Caenorhabditis elegans).